The following is a 223-amino-acid chain: Mitochondrial cardiolipin hydrolase (223 aa).

At 1–6 (MGCASS) the chain is on the mitochondrial intermembrane side. The chain crosses the membrane as a helical span at residues 7-24 (KEEVALTPLSDVNAAKEV). The Cytoplasmic portion of the chain corresponds to 25–223 (ADLKAQVDQL…QFDKLWDMFK (199 aa)). The PLD phosphodiesterase domain maps to 164 to 191 (TAAHMHHKFAIIDGRLLLNGSFNWTRQA). Catalysis depends on residues His-169, Lys-171, and Asp-176.

This sequence belongs to the phospholipase D family. MitoPLD/Zucchini subfamily. As to quaternary structure, homodimer.

Its subcellular location is the mitochondrion outer membrane. Plays a critical role in PIWI-interacting RNA (piRNA) biogenesis. piRNAs provide essential protection against the activity of mobile genetic elements. piRNA-mediated transposon silencing is thus critical for maintaining genome stability. Backbone-non-specific, single strand-specific nuclease, cleaving either RNA or DNA substrates with similar affinity. Produces 5' phosphate and 3' hydroxyl termini, suggesting it could directly participate in the processing of primary piRNA transcripts. Has been proposed to act as a cardiolipin hydrolase to generate phosphatidic acid at mitochondrial surface. Although it cannot be excluded that it can act as a phospholipase in some circumstances, this activity could not be confirmed. The polypeptide is Mitochondrial cardiolipin hydrolase (Chlamydomonas reinhardtii (Chlamydomonas smithii)).